A 951-amino-acid chain; its full sequence is Glycine dehydrogenase (decarboxylating) 1 (951 aa).

Lys-703 bears the N6-(pyridoxal phosphate)lysine mark.

This sequence belongs to the GcvP family. In terms of assembly, the glycine cleavage system is composed of four proteins: P, T, L and H. It depends on pyridoxal 5'-phosphate as a cofactor.

It catalyses the reaction N(6)-[(R)-lipoyl]-L-lysyl-[glycine-cleavage complex H protein] + glycine + H(+) = N(6)-[(R)-S(8)-aminomethyldihydrolipoyl]-L-lysyl-[glycine-cleavage complex H protein] + CO2. Functionally, the glycine cleavage system catalyzes the degradation of glycine. The P protein binds the alpha-amino group of glycine through its pyridoxal phosphate cofactor; CO(2) is released and the remaining methylamine moiety is then transferred to the lipoamide cofactor of the H protein. The polypeptide is Glycine dehydrogenase (decarboxylating) 1 (gcvP1) (Pseudomonas putida (strain ATCC 47054 / DSM 6125 / CFBP 8728 / NCIMB 11950 / KT2440)).